Consider the following 151-residue polypeptide: Neuroglobin (151 aa).

One can recognise a Globin domain in the interval M1 to N149. 2 residues coordinate heme b: H64 and H96.

It belongs to the globin family. Monomer. Homodimer and homotetramer; disulfide-linked. Mainly monomeric but also detected as part of homodimers and homotetramers. Interacts with 14-3-3 proteins; regulates the phosphorylation of NGB. Could interact (ferrous form) with G-alpha(i) proteins (GTP-bound form). Post-translationally, phosphorylated during hypoxia by ERK1/ERK2. Phosphorylation regulates the heme pocket hexacoordination preventing the association of His-64 with the heme metal center. Thereby, promotes the access of dioxygen and nitrite to the heme and stimulates the nitrite reductase activity. Phosphorylation during hypoxia is stabilized by 14-3-3 proteins.

The protein localises to the cytoplasm. It localises to the cytosol. The protein resides in the mitochondrion matrix. It catalyses the reaction Fe(III)-heme b-[protein] + nitric oxide + H2O = Fe(II)-heme b-[protein] + nitrite + 2 H(+). In terms of biological role, monomeric globin with a bis-histidyl six-coordinate heme-iron atom through which it can bind dioxygen, carbon monoxide and nitric oxide. Could help transport oxygen and increase its availability to the metabolically active neuronal tissues, though its low quantity in tissues as well as its high affinity for dioxygen, which may limit its oxygen-releasing ability, argue against it. The ferrous/deoxygenated form exhibits a nitrite reductase activity and it could produce nitric oxide which in turn inhibits cellular respiration in response to hypoxia. In its ferrous/deoxygenated state, it may also exhibit GDI (Guanine nucleotide Dissociation Inhibitor) activity toward heterotrimeric G-alpha proteins, thereby regulating signal transduction to facilitate neuroprotective responses in the wake of hypoxia and associated oxidative stress. The polypeptide is Neuroglobin (Sus scrofa (Pig)).